Reading from the N-terminus, the 232-residue chain is tRNA (guanine-N(7)-)-methyltransferase (232 aa).

Positions 63, 88, 115, and 137 each coordinate S-adenosyl-L-methionine. Aspartate 137 is an active-site residue. Residues lysine 141, aspartate 173, and 211-214 (TRYE) contribute to the substrate site.

The protein belongs to the class I-like SAM-binding methyltransferase superfamily. TrmB family.

The catalysed reaction is guanosine(46) in tRNA + S-adenosyl-L-methionine = N(7)-methylguanosine(46) in tRNA + S-adenosyl-L-homocysteine. The protein operates within tRNA modification; N(7)-methylguanine-tRNA biosynthesis. In terms of biological role, catalyzes the formation of N(7)-methylguanine at position 46 (m7G46) in tRNA. The polypeptide is tRNA (guanine-N(7)-)-methyltransferase (Rhizobium meliloti (strain 1021) (Ensifer meliloti)).